The following is a 264-amino-acid chain: Astacin-like metalloprotease toxin 1 (264 aa).

Residues 1 to 16 (MIKYIGVFAFLVGGFC) form the signal peptide. The propeptide occupies 17 to 51 (HDFETVISNQDPIVDGMRLVEGDMLFDDGPLFTER). Residues 52–249 (NAVKYDQQLW…VKVNKLYKCP (198 aa)) enclose the Peptidase M12A domain. Intrachain disulfides connect Cys-93/Cys-248 and Cys-114/Cys-135. His-143 contributes to the Zn(2+) binding site. Residue Glu-144 is part of the active site. 2 residues coordinate Zn(2+): His-147 and His-153. 2 N-linked (GlcNAc...) asparagine glycosylation sites follow: Asn-173 and Asn-185.

Monomer. Zn(2+) serves as cofactor. In terms of tissue distribution, expressed by the venom gland.

Its subcellular location is the secreted. Its activity is regulated as follows. Inhibited by 1,10-phenanthroline. Its function is as follows. Zinc metalloprotease. Provoques deadhesion of endothelial cells from cell cultures, and also degradation of fibronectin, fibrinogen and gelatin in vitro. Its role in the venom is not fully understood but it might act as a spreading factor that facilitates diffusion of other venom toxins. Alternatively, it might be involved in the proteolytic processing of other venom toxins or it might play a role in extra-oral digestion of prey. This chain is Astacin-like metalloprotease toxin 1, found in Loxosceles intermedia (Brown spider).